The primary structure comprises 350 residues: Anthranilate phosphoribosyltransferase (350 aa).

Residues Gly94, 97–98, Thr102, 104–107, 122–130, and Ser134 each bind 5-phospho-alpha-D-ribose 1-diphosphate; these read GS, NVST, and KHGNRSVSS. Gly94 is a binding site for anthranilate. Ser106 is a Mg(2+) binding site. Asn125 provides a ligand contact to anthranilate. Arg180 is a binding site for anthranilate. Mg(2+) is bound by residues Asp239 and Glu240.

This sequence belongs to the anthranilate phosphoribosyltransferase family. As to quaternary structure, homodimer. Mg(2+) is required as a cofactor.

It catalyses the reaction N-(5-phospho-beta-D-ribosyl)anthranilate + diphosphate = 5-phospho-alpha-D-ribose 1-diphosphate + anthranilate. It functions in the pathway amino-acid biosynthesis; L-tryptophan biosynthesis; L-tryptophan from chorismate: step 2/5. In terms of biological role, catalyzes the transfer of the phosphoribosyl group of 5-phosphorylribose-1-pyrophosphate (PRPP) to anthranilate to yield N-(5'-phosphoribosyl)-anthranilate (PRA). This Geotalea uraniireducens (strain Rf4) (Geobacter uraniireducens) protein is Anthranilate phosphoribosyltransferase.